The sequence spans 329 residues: Phytochromobilin:ferredoxin oxidoreductase, chloroplastic (329 aa).

Residues 1–45 (MALSMEFGFSIGSCFKAPNPPVLISASPNKINFTLRRRKKRFLLR) constitute a chloroplast transit peptide.

The protein belongs to the HY2 family.

The protein resides in the plastid. Its subcellular location is the chloroplast. It carries out the reaction (3Z)-phytochromobilin + 2 oxidized [2Fe-2S]-[ferredoxin] = biliverdin IXalpha + 2 reduced [2Fe-2S]-[ferredoxin] + 2 H(+). Functionally, catalyzes the two-electron reduction of biliverdin IX-alpha to the tetrapyrrole chromophore phytochromobilin (PPhiB). The sequence is that of Phytochromobilin:ferredoxin oxidoreductase, chloroplastic from Arabidopsis thaliana (Mouse-ear cress).